Consider the following 187-residue polypeptide: Pseudo histidine-containing phosphotransfer protein 1 (187 aa).

The 96-residue stretch at Ser74–Tyr169 folds into the HPt domain.

In terms of biological role, functions as a two-component phosphorelay mediator between cytokinin sensor histidine kinases and response regulators (B-type ARRs). Plays an important role in propagating cytokinin signal transduction. This chain is Pseudo histidine-containing phosphotransfer protein 1, found in Oryza sativa subsp. japonica (Rice).